A 112-amino-acid polypeptide reads, in one-letter code: uncharacterized protein (112 aa).

This is an uncharacterized protein from Caenorhabditis elegans.